The following is a 356-amino-acid chain: DNA polymerase IV (356 aa).

Residues I6–G187 enclose the UmuC domain. Residues D10 and D105 each contribute to the Mg(2+) site. E106 is a catalytic residue.

Belongs to the DNA polymerase type-Y family. In terms of assembly, monomer. Mg(2+) is required as a cofactor.

It is found in the cytoplasm. The catalysed reaction is DNA(n) + a 2'-deoxyribonucleoside 5'-triphosphate = DNA(n+1) + diphosphate. In terms of biological role, poorly processive, error-prone DNA polymerase involved in untargeted mutagenesis. Copies undamaged DNA at stalled replication forks, which arise in vivo from mismatched or misaligned primer ends. These misaligned primers can be extended by PolIV. Exhibits no 3'-5' exonuclease (proofreading) activity. May be involved in translesional synthesis, in conjunction with the beta clamp from PolIII. The protein is DNA polymerase IV of Staphylococcus epidermidis (strain ATCC 12228 / FDA PCI 1200).